A 559-amino-acid chain; its full sequence is Sulfite reductase [NADPH] hemoprotein beta-component (559 aa).

[4Fe-4S] cluster is bound by residues C423, C429, C468, and C472. C472 contributes to the siroheme binding site.

This sequence belongs to the nitrite and sulfite reductase 4Fe-4S domain family. As to quaternary structure, alpha(8)-beta(8). The alpha component is a flavoprotein, the beta component is a hemoprotein. Siroheme serves as cofactor. It depends on [4Fe-4S] cluster as a cofactor.

The enzyme catalyses hydrogen sulfide + 3 NADP(+) + 3 H2O = sulfite + 3 NADPH + 4 H(+). It participates in sulfur metabolism; hydrogen sulfide biosynthesis; hydrogen sulfide from sulfite (NADPH route): step 1/1. Component of the sulfite reductase complex that catalyzes the 6-electron reduction of sulfite to sulfide. This is one of several activities required for the biosynthesis of L-cysteine from sulfate. The protein is Sulfite reductase [NADPH] hemoprotein beta-component of Thiocapsa roseopersicina.